The following is a 656-amino-acid chain: MNNVHIIKPLSLPQRFFSCIFHPLLLIFFTSVILTIWGSFSVIDITMAKMSHAQVKRNDTVSTFASISTATATATTTATTTATMTAVTTQHAIYSANSYSLNKTFIDNTIDQYFESKLRSIESTVGTDMQEKFKSYTDDILDNKQKLINDQISLETELIKEVLEVNNTIFNELLTKSQLINDTWNEISEDAMTIDKDSISQMASNLLLNYSMFDSIFGNYSRKLKSLQNFNGTITDFSTQLDTSSTLSLNFLRNSTDWLQLKRNFTANLQNEISILSGGSTEVTSSTSIIKRSLKTNSEENSVLSAVKNHVFRKCKRMTIIFTVMYFAFVILLMAIERILFQLENQQVNLVMSQINGLTGQTNFTKYNKVLKSLITTLNLSTLYPIPYQLTKLINQKIFKREPEKIDDKKVKKSKLFYCNWWIISNGAHLWLFGFLMLLIHWQIVTRLTNFEVPSLPTFHKRAGPSLYKREVWTDGNITTTIEGFINDSVSLLCENFQMEVNEKFITANLSLQTDPNLKVQSTDILNLWVNDTNTQFEKYLNESSQNWQGIDLQVEPLLGSDSINEFLGQYFLPTYEVTNTNSSFALDIQKYGIINRGINITNASVAALSSLSKRQIKDKEQKQTYFLHTVYKWGLLAVCLTILFHHMLIFIILKL.

Transmembrane regions (helical) follow at residues 16–36 (FFSCIFHPLLLIFFTSVILTI), 320–340 (IIFTVMYFAFVILLMAIERIL), 422–442 (WIISNGAHLWLFGFLMLLIHW), and 634–654 (WGLLAVCLTILFHHMLIFIIL).

It localises to the membrane. The chain is Pheromone-regulated membrane protein 2 (PRM2) from Saccharomyces cerevisiae (strain ATCC 204508 / S288c) (Baker's yeast).